The following is an 80-amino-acid chain: Defensin coprisin (80 aa).

The signal sequence occupies residues 1–20; sequence MAKLIAFALVASLCLSMVLC. Positions 21–37 are excised as a propeptide; the sequence is NPLPEEVQEEGLVRQKR. Intrachain disulfides connect cysteine 40-cysteine 71, cysteine 57-cysteine 76, and cysteine 61-cysteine 78.

This sequence belongs to the invertebrate defensin family. Type 1 subfamily.

It localises to the secreted. It is found in the target cell membrane. Functionally, potent broad-spectrum antibacterial peptide against both Gram-positive (B.subtilis, S.epidermidis, and S.aureus) and Gram-negative bacteria (E.coli, S.typhimurium, and P.aeruginosa). Is also active against all antibiotic-resistant bacterial strains tested. Induces apoptosis in C.albicans, but does not disrupt the fungal plasma membrane at all. Acts by permeabilizing the bacterial cell membrane, but not human membranes. Also shows potent anti-inflammatory activities, since it reduces both LPS-induced nitric oxide release and pro-inflammatory cytokine production. Anti-inflammatory activities are initiated by suppressing the binding of LPS to toll-like receptor 4 (TLR4), and subsequently inhibiting the phosphorylation of p38 mitogen-activated protein kinase (MAPK) and nuclear translocation of NF-kB (TNFRSF11A). Does not show hemolytic activity against human erythrocytes. The polypeptide is Defensin coprisin (Copris tripartitus (Dung beetle)).